The sequence spans 116 residues: Large ribosomal subunit protein bL20 (116 aa).

It belongs to the bacterial ribosomal protein bL20 family.

Its function is as follows. Binds directly to 23S ribosomal RNA and is necessary for the in vitro assembly process of the 50S ribosomal subunit. It is not involved in the protein synthesizing functions of that subunit. This Mycoplasmopsis pulmonis (strain UAB CTIP) (Mycoplasma pulmonis) protein is Large ribosomal subunit protein bL20.